We begin with the raw amino-acid sequence, 830 residues long: GPI ethanolamine phosphate transferase 2 (830 aa).

An N-terminal signal peptide occupies residues 1-32 (MNLKQFTCLSCAQLLAILLFIFAFFPRKIVLT). Topologically, residues 33 to 321 (GISKQDPDQD…QYLETVQQID (289 aa)) are lumenal. N-linked (GlcNAc...) asparagine glycosylation is found at asparagine 145, asparagine 185, and asparagine 298. Residues 322-342 (IVPTIAALFGMPIPMNSVGII) traverse the membrane as a helical segment. Residues 343–405 (IPDFLQLLPN…TKSATNYNYP (63 aa)) lie on the Cytoplasmic side of the membrane. Residues 406–426 (LLTLAFVGFLIITIIAIYVLL) traverse the membrane as a helical segment. Residues 427–439 (RYSGPDFWQLRVS) lie on the Lumenal side of the membrane. Residues 440–460 (SLSVLLVSIILGVSTFASSFI) traverse the membrane as a helical segment. The Cytoplasmic portion of the chain corresponds to 461 to 469 (EEEHQLWWW). A helical membrane pass occupies residues 470–490 (IVTAFSAVPLFVYRLNVLIIV). The Lumenal portion of the chain corresponds to 491-533 (RWFIMMACVRSIKFWNNSGQKFIYSNVMSNLLNQNPSWKWCLN). N-linked (GlcNAc...) asparagine glycosylation occurs at asparagine 506. Residues 534–554 (MLTFLVLIMASAGFQVLHFIV) traverse the membrane as a helical segment. The Cytoplasmic portion of the chain corresponds to 555–598 (TTILVGLCFTYKISWEIVNGNQAEIPLFMHDLLAKIDFAPTESN). Residues 599 to 619 (LIVLARVFFQAWAIVVISRLV) form a helical membrane-spanning segment. At 620–651 (LTKLKVLNKNYLIKDMKVYITILLMFQTSSQN) the chain is on the lumenal side. The chain crosses the membrane as a helical span at residues 652–672 (IGQFLVFQILESQIFYFFQNI). At 673 to 682 (PTASLTSTSK) the chain is on the cytoplasmic side. The chain crosses the membrane as a helical span at residues 683–703 (IYFSNLVSLILQNFTFFQFGG). The Lumenal segment spans residues 704-724 (TNSISTIDLGNAYHGVSSDYN). Residues 725 to 745 (IYVVGILMSVANFAPAIYWSM) form a helical membrane-spanning segment. The Cytoplasmic portion of the chain corresponds to 746–768 (LPWSINYASIPAQVKLQTFIRSK). The helical transmembrane segment at 769-789 (LPAFTYHCIFGTCLMTACVVL) threads the bilayer. Topologically, residues 790–805 (RFHLFIWSVFSPKLCY) are lumenal. Residues 806–826 (FLGWNFVMGLLNGWLPELALL) form a helical membrane-spanning segment. Residues 827-830 (CALD) are Cytoplasmic-facing.

This sequence belongs to the PIGG/PIGN/PIGO family. PIGG subfamily. In terms of processing, N-glycosylated.

It is found in the endoplasmic reticulum membrane. It functions in the pathway glycolipid biosynthesis; glycosylphosphatidylinositol-anchor biosynthesis. Functionally, ethanolamine phosphate transferase involved in glycosylphosphatidylinositol-anchor biosynthesis. Transfers ethanolamine phosphate to the GPI second mannose. Although not essential, addition of ethanolamine phosphate to the second mannose plays an important role in cell separation via the GPI-based modification of daughter-specific proteins. The sequence is that of GPI ethanolamine phosphate transferase 2 (LAS21) from Saccharomyces cerevisiae (strain ATCC 204508 / S288c) (Baker's yeast).